The primary structure comprises 1203 residues: Nitric oxide synthase 3 (1203 aa).

The interval 1 to 71 (MGNLKSVAQE…PPEGPKFPRV (71 aa)) is disordered. A lipid anchor (N-myristoyl glycine) is attached at G2. 2 S-palmitoyl cysteine lipidation sites follow: C15 and C26. Residues 15–27 (CGLGLGLGLGLCG) are compositionally biased toward gly residues. The residue at position 33 (T33) is a Phosphothreonine. The span at 33 to 66 (TPAPEPSRAPASLLPPAPEHSPPSSPLTQPPEGP) shows a compositional bias: pro residues. Positions 94 and 99 each coordinate Zn(2+). Positions 98 to 486 (RCLGSLVFPR…PDPWKGSAAK (389 aa)) are interaction with NOSIP. Residue S102 participates in (6R)-L-erythro-5,6,7,8-tetrahydrobiopterin binding. The residue at position 114 (S114) is a Phosphoserine; by CDK5. C184 contacts heme b. Residues Q247, W356, Y357, and E361 each coordinate L-arginine. R365 serves as a coordination point for (6R)-L-erythro-5,6,7,8-tetrahydrobiopterin. N366 is an L-arginine binding site. Positions 446, 447, and 460 each coordinate (6R)-L-erythro-5,6,7,8-tetrahydrobiopterin. Heme b is bound at residue Y475. The interval 491–510 (TRKKTFKEVANAVKISASLM) is calmodulin-binding. Position 495 is a phosphothreonine; by AMPK (T495). Residues 520–703 (ATILYGSETG…AFRGWAQAAF (184 aa)) form the Flavodoxin-like domain. Residues S526, E527, T528, R530, S572, and T573 each coordinate FMN. 3 positions are modified to phosphoserine: S615, S633, and S638. Residues S654, C661, E687, and Q691 each contribute to the FMN site. The region spanning 756–1002 (RKMFQATIRS…IRGAPSFRLP (247 aa)) is the FAD-binding FR-type domain. R776 contacts NADP(+). H798 provides a ligand contact to FAD. S836 carries the phosphoserine modification. FAD contacts are provided by R938, Y940, S941, T956, A958, Y962, V975, C976, and S977. NADP(+)-binding residues include T1016, R1049, S1078, R1079, K1085, Y1087, and Q1089. T1175 carries the phosphothreonine modification. Position 1177 is a phosphoserine; by AMPK (S1177). The residue at position 1179 (S1179) is a Phosphoserine.

This sequence belongs to the NOS family. As to quaternary structure, homodimer. Interacts with NOSIP and NOSTRIN. Interacts with HSP90AB1. Forms a complex with ASL, ASS1 and SLC7A1; the complex regulates cell-autonomous L-arginine synthesis and citrulline recycling while channeling extracellular L-arginine to nitric oxide synthesis pathway. Heme b serves as cofactor. It depends on FAD as a cofactor. The cofactor is FMN. Requires (6R)-L-erythro-5,6,7,8-tetrahydrobiopterin as cofactor. Phosphorylation by AMPK at Ser-1177 in the presence of Ca(2+)-calmodulin (CaM) activates activity. In absence of Ca(2+)-calmodulin, AMPK also phosphorylates Thr-495, resulting in inhibition of activity. Phosphorylation of Ser-114 by CDK5 reduces activity. In terms of tissue distribution, platelets, placenta, liver and kidney.

The protein localises to the cell membrane. It localises to the membrane. Its subcellular location is the caveola. It is found in the cytoplasm. The protein resides in the cytoskeleton. The protein localises to the golgi apparatus. The enzyme catalyses 2 L-arginine + 3 NADPH + 4 O2 + H(+) = 2 L-citrulline + 2 nitric oxide + 3 NADP(+) + 4 H2O. With respect to regulation, stimulated by calcium/calmodulin. Inhibited by NOSIP and NOSTRIN. Functionally, produces nitric oxide (NO) which is implicated in vascular smooth muscle relaxation through a cGMP-mediated signal transduction pathway. NO mediates vascular endothelial growth factor (VEGF)-induced angiogenesis in coronary vessels and promotes blood clotting through the activation of platelets. In terms of biological role, lacks eNOS activity, dominant-negative form that may down-regulate eNOS activity by forming heterodimers with isoform 1. The protein is Nitric oxide synthase 3 of Homo sapiens (Human).